The chain runs to 1360 residues: DNA-directed RNA polymerase subunit beta (1360 aa).

The protein belongs to the RNA polymerase beta chain family. The RNAP catalytic core consists of 2 alpha, 1 beta, 1 beta' and 1 omega subunit. When a sigma factor is associated with the core the holoenzyme is formed, which can initiate transcription.

It carries out the reaction RNA(n) + a ribonucleoside 5'-triphosphate = RNA(n+1) + diphosphate. Its function is as follows. DNA-dependent RNA polymerase catalyzes the transcription of DNA into RNA using the four ribonucleoside triphosphates as substrates. In Teredinibacter turnerae (strain ATCC 39867 / T7901), this protein is DNA-directed RNA polymerase subunit beta.